The following is a 1028-amino-acid chain: Serine/threonine-protein kinase fray2 (1028 aa).

A disordered region spans residues 1 to 67 (MSDDKYHHDK…PKPRKNYPNS (67 aa)). Over residues 20 to 54 (KQSTAAALSSSSTLASSSSMTTTTTTTSTTTTAAS) the composition is skewed to low complexity. The 260-residue stretch at 71–330 (YELKETIGKG…PSKLLEHRFF (260 aa)) folds into the Protein kinase domain. ATP contacts are provided by residues 77 to 85 (IGKGGSGLV) and K100. Residue D195 is the Proton acceptor of the active site. T230 carries the phosphothreonine; by autocatalysis modification. Residues 368–381 (TSSPQFDTGHSNSA) are compositionally biased toward polar residues. 3 disordered regions span residues 368-467 (TSSP…STVV), 486-561 (AYHQ…LQQP), and 580-914 (DLIT…IQSK). 2 stretches are compositionally biased toward low complexity: residues 387–419 (PNEN…NNNN) and 432–458 (TPSH…SNHT). 2 stretches are compositionally biased toward polar residues: residues 503-518 (IPNH…SAHS) and 528-542 (IHPT…VVNN). Over residues 543–561 (TQQPQTLQPPQQQHQLQQP) the composition is skewed to low complexity. Residues 595–616 (IPSSSSHGNIPSLVTTSPKSPL) show a composition bias toward polar residues. 2 stretches are compositionally biased toward low complexity: residues 617 to 642 (QHQQ…ISSN) and 683 to 700 (SSRA…SHTS). Composition is skewed to basic and acidic residues over residues 701–714 (SSDE…SDRK), 728–742 (SKRD…DRSN), 753–855 (VSRD…DRSR), and 865–893 (SRDS…DYKS).

It belongs to the protein kinase superfamily. STE Ser/Thr protein kinase family. STE20 subfamily. Mn(2+) is required as a cofactor. Undergoes autophosphorylation in the catalytic domain.

The enzyme catalyses L-seryl-[protein] + ATP = O-phospho-L-seryl-[protein] + ADP + H(+). The catalysed reaction is L-threonyl-[protein] + ATP = O-phospho-L-threonyl-[protein] + ADP + H(+). The sequence is that of Serine/threonine-protein kinase fray2 from Dictyostelium discoideum (Social amoeba).